An 84-amino-acid polypeptide reads, in one-letter code: Large ribosomal subunit protein bL27 (84 aa).

Residues 1–22 (MAHKKGASSTRNGRDSNAQRLG) are disordered. The span at 7-19 (ASSTRNGRDSNAQ) shows a compositional bias: polar residues.

Belongs to the bacterial ribosomal protein bL27 family.

This chain is Large ribosomal subunit protein bL27, found in Streptomyces coelicolor (strain ATCC BAA-471 / A3(2) / M145).